A 176-amino-acid polypeptide reads, in one-letter code: Large ribosomal subunit protein uL6 (176 aa).

It belongs to the universal ribosomal protein uL6 family. Part of the 50S ribosomal subunit.

In terms of biological role, this protein binds to the 23S rRNA, and is important in its secondary structure. It is located near the subunit interface in the base of the L7/L12 stalk, and near the tRNA binding site of the peptidyltransferase center. In Paraburkholderia phymatum (strain DSM 17167 / CIP 108236 / LMG 21445 / STM815) (Burkholderia phymatum), this protein is Large ribosomal subunit protein uL6.